A 707-amino-acid polypeptide reads, in one-letter code: Integrator complex subunit 13 (707 aa).

The span at 565-625 (PPEEEERKKR…AEAEVIKDSP (61 aa)) shows a compositional bias: basic and acidic residues. Residues 565–651 (PPEEEERKKR…TGPAEKSKGP (87 aa)) are disordered. Positions 567–622 (EEEERKKRGRKREDKEEKAEKPPKENEHEKKWQESERVKSVLDREKEDLAEAEVIK) form a coiled coil. Residues 573–583 (KRGRKREDKEE) carry the Nuclear localization signal (NLS) motif. Residues 650–695 (GPMSLLSLWSSRINTANSRKHQEFVGRLNSVNNKAELYQHLKEENG) form a cleavage module binding motif (CMBM) region.

Belongs to the Integrator subunit 13 family. Component of the Integrator complex, composed of core subunits INTS1, INTS2, INTS3, INTS4, INTS5, INTS6, INTS7, INTS8, INTS9/RC74, INTS10, INTS11/CPSF3L, INTS12, INTS13, INTS14 and INTS15. The core complex associates with protein phosphatase 2A subunits PPP2CA and PPP2R1A, to form the Integrator-PP2A (INTAC) complex. INTS13 is part of the tail subcomplex, composed of INTS10, INTS13, INTS14 and INTS15.

It localises to the nucleus. The protein localises to the cytoplasm. Functionally, component of the integrator complex, a multiprotein complex that terminates RNA polymerase II (Pol II) transcription in the promoter-proximal region of genes. The integrator complex provides a quality checkpoint during transcription elongation by driving premature transcription termination of transcripts that are unfavorably configured for transcriptional elongation: the complex terminates transcription by (1) catalyzing dephosphorylation of the C-terminal domain (CTD) of Pol II subunit POLR2A/RPB1 and SUPT5H/SPT5, (2) degrading the exiting nascent RNA transcript via endonuclease activity and (3) promoting the release of Pol II from bound DNA. The integrator complex is also involved in terminating the synthesis of non-coding Pol II transcripts, such as enhancer RNAs (eRNAs), small nuclear RNAs (snRNAs), telomerase RNAs and long non-coding RNAs (lncRNAs). Within the integrator complex, INTS13 is part of the integrator tail module and acts as a platform for the recruitment of transcription factors at promoters. This chain is Integrator complex subunit 13, found in Xenopus tropicalis (Western clawed frog).